A 368-amino-acid polypeptide reads, in one-letter code: Probable pectate lyase 4 (368 aa).

An N-terminal signal peptide occupies residues Met-1 to Ser-25. Asn-27 is a glycosylation site (N-linked (GlcNAc...) asparagine). Ca(2+) is bound by residues Asp-167, Asp-191, and Asp-195. Arg-247 is an active-site residue.

Belongs to the polysaccharide lyase 1 family. It depends on Ca(2+) as a cofactor.

The catalysed reaction is Eliminative cleavage of (1-&gt;4)-alpha-D-galacturonan to give oligosaccharides with 4-deoxy-alpha-D-galact-4-enuronosyl groups at their non-reducing ends.. Its pathway is glycan metabolism; pectin degradation; 2-dehydro-3-deoxy-D-gluconate from pectin: step 2/5. The polypeptide is Probable pectate lyase 4 (Arabidopsis thaliana (Mouse-ear cress)).